Here is a 203-residue protein sequence, read N- to C-terminus: Molybdenum cofactor guanylyltransferase (203 aa).

Residues 12–14 (LAG), Lys25, Asn53, Asp71, and Asp101 each bind GTP. Asp101 is a Mg(2+) binding site.

The protein belongs to the MobA family. As to quaternary structure, monomer. Mg(2+) is required as a cofactor.

Its subcellular location is the cytoplasm. The catalysed reaction is Mo-molybdopterin + GTP + H(+) = Mo-molybdopterin guanine dinucleotide + diphosphate. Transfers a GMP moiety from GTP to Mo-molybdopterin (Mo-MPT) cofactor (Moco or molybdenum cofactor) to form Mo-molybdopterin guanine dinucleotide (Mo-MGD) cofactor. This Cupriavidus metallidurans (strain ATCC 43123 / DSM 2839 / NBRC 102507 / CH34) (Ralstonia metallidurans) protein is Molybdenum cofactor guanylyltransferase.